Reading from the N-terminus, the 337-residue chain is Biotin synthase (337 aa).

Positions 58–288 constitute a Radical SAM core domain; the sequence is AGSELLHACS…AHPHKIIKFA (231 aa). [4Fe-4S] cluster-binding residues include Cys76, Cys80, and Cys83. Positions 155, 216, and 286 each coordinate [2Fe-2S] cluster.

It belongs to the radical SAM superfamily. Biotin synthase family. As to quaternary structure, homodimer. [4Fe-4S] cluster serves as cofactor. [2Fe-2S] cluster is required as a cofactor.

It catalyses the reaction (4R,5S)-dethiobiotin + (sulfur carrier)-SH + 2 reduced [2Fe-2S]-[ferredoxin] + 2 S-adenosyl-L-methionine = (sulfur carrier)-H + biotin + 2 5'-deoxyadenosine + 2 L-methionine + 2 oxidized [2Fe-2S]-[ferredoxin]. It functions in the pathway cofactor biosynthesis; biotin biosynthesis; biotin from 7,8-diaminononanoate: step 2/2. Catalyzes the conversion of dethiobiotin (DTB) to biotin by the insertion of a sulfur atom into dethiobiotin via a radical-based mechanism. The polypeptide is Biotin synthase (Pelodictyon phaeoclathratiforme (strain DSM 5477 / BU-1)).